Reading from the N-terminus, the 442-residue chain is 5-methylthioadenosine/S-adenosylhomocysteine deaminase (442 aa).

The Zn(2+) site is built by H70 and H72. Residues E99 and H191 each contribute to the substrate site. H218 lines the Zn(2+) pocket. Residues E221 and D306 each coordinate substrate. Position 306 (D306) interacts with Zn(2+).

The protein belongs to the metallo-dependent hydrolases superfamily. MTA/SAH deaminase family. Zn(2+) is required as a cofactor.

It catalyses the reaction S-adenosyl-L-homocysteine + H2O + H(+) = S-inosyl-L-homocysteine + NH4(+). The catalysed reaction is S-methyl-5'-thioadenosine + H2O + H(+) = S-methyl-5'-thioinosine + NH4(+). Functionally, catalyzes the deamination of 5-methylthioadenosine and S-adenosyl-L-homocysteine into 5-methylthioinosine and S-inosyl-L-homocysteine, respectively. Is also able to deaminate adenosine. This Nitratidesulfovibrio vulgaris (strain DP4) (Desulfovibrio vulgaris) protein is 5-methylthioadenosine/S-adenosylhomocysteine deaminase.